The following is a 255-amino-acid chain: tRNA pseudouridine synthase A (255 aa).

Residue Asp-56 is the Nucleophile of the active site. Tyr-114 contacts substrate.

This sequence belongs to the tRNA pseudouridine synthase TruA family. Homodimer.

It carries out the reaction uridine(38/39/40) in tRNA = pseudouridine(38/39/40) in tRNA. Formation of pseudouridine at positions 38, 39 and 40 in the anticodon stem and loop of transfer RNAs. The protein is tRNA pseudouridine synthase A of Methylacidiphilum infernorum (isolate V4) (Methylokorus infernorum (strain V4)).